The sequence spans 437 residues: tRNA modification GTPase MnmE (437 aa).

Residues Arg-21, Glu-80, and Arg-120 each contribute to the (6S)-5-formyl-5,6,7,8-tetrahydrofolate site. In terms of domain architecture, TrmE-type G spans 218–361; it reads GFVVVLAGPP…LLDRVAAAAG (144 aa). Asn-228 is a binding site for K(+). GTP-binding positions include 228–233, 247–253, and 272–275; these read NAGKST, SPIPGTT, and DTAG. Ser-232 contacts Mg(2+). Positions 247, 249, and 252 each coordinate K(+). Residue Thr-253 participates in Mg(2+) binding. Residue Lys-437 coordinates (6S)-5-formyl-5,6,7,8-tetrahydrofolate.

This sequence belongs to the TRAFAC class TrmE-Era-EngA-EngB-Septin-like GTPase superfamily. TrmE GTPase family. As to quaternary structure, homodimer. Heterotetramer of two MnmE and two MnmG subunits. It depends on K(+) as a cofactor.

It localises to the cytoplasm. In terms of biological role, exhibits a very high intrinsic GTPase hydrolysis rate. Involved in the addition of a carboxymethylaminomethyl (cmnm) group at the wobble position (U34) of certain tRNAs, forming tRNA-cmnm(5)s(2)U34. This is tRNA modification GTPase MnmE from Methylobacterium sp. (strain 4-46).